Here is a 274-residue protein sequence, read N- to C-terminus: Small ribosomal subunit biogenesis GTPase RsgA (274 aa).

The CP-type G domain occupies 58–215; the sequence is KNYLNRPKVA…LVDSPGFSIY (158 aa). Residues 108-111 and 158-166 each bind GTP; these read SKLD and GHSGVGKST. Residues Cys238, Cys243, His245, and Cys252 each coordinate Zn(2+).

The protein belongs to the TRAFAC class YlqF/YawG GTPase family. RsgA subfamily. Monomer. Associates with 30S ribosomal subunit, binds 16S rRNA. Requires Zn(2+) as cofactor.

It is found in the cytoplasm. In terms of biological role, one of several proteins that assist in the late maturation steps of the functional core of the 30S ribosomal subunit. Helps release RbfA from mature subunits. May play a role in the assembly of ribosomal proteins into the subunit. Circularly permuted GTPase that catalyzes slow GTP hydrolysis, GTPase activity is stimulated by the 30S ribosomal subunit. The polypeptide is Small ribosomal subunit biogenesis GTPase RsgA (Mycoplasmoides gallisepticum (strain R(low / passage 15 / clone 2)) (Mycoplasma gallisepticum)).